A 290-amino-acid chain; its full sequence is MKIAVYGKGGIGKSTTSCNISIALARRGKKVLQIGCDPKHDSTFTLTGFLIPTIIDTLQSKDYHYEDVWPEDVIYKGYGGVDCVEAGGPPAGAGCGGYVVGETVKSLKELNAFYEYDIILFDVLGDVVCGGFAAPLNYADYCIIITDNGFDALFAANRIAASVREKAHTHPLRLAGLVGNRTSKRDLIDKYVEACPMPVLEVLPLIEDIRVSRVKGKTLFEMAESQPTLNYVCEFYLNIADQILSQPEGVVPKEIPDRELFSLLSDFYLNPINSGKNENIENNLHDFMII.

Residues 10-15 and Lys39 each bind ATP; that span reads GIGKST. Ser14 serves as a coordination point for Mg(2+). Residues Cys95 and Cys129 each contribute to the [4Fe-4S] cluster site. 180 to 181 serves as a coordination point for ATP; the sequence is NR.

It belongs to the NifH/BchL/ChlL family. As to quaternary structure, homodimer. Protochlorophyllide reductase is composed of three subunits; ChlL, ChlN and ChlB. Requires [4Fe-4S] cluster as cofactor.

Its subcellular location is the plastid. It is found in the chloroplast. The enzyme catalyses chlorophyllide a + oxidized 2[4Fe-4S]-[ferredoxin] + 2 ADP + 2 phosphate = protochlorophyllide a + reduced 2[4Fe-4S]-[ferredoxin] + 2 ATP + 2 H2O. It participates in porphyrin-containing compound metabolism; chlorophyll biosynthesis (light-independent). Component of the dark-operative protochlorophyllide reductase (DPOR) that uses Mg-ATP and reduced ferredoxin to reduce ring D of protochlorophyllide (Pchlide) to form chlorophyllide a (Chlide). This reaction is light-independent. The L component serves as a unique electron donor to the NB-component of the complex, and binds Mg-ATP. The polypeptide is Light-independent protochlorophyllide reductase iron-sulfur ATP-binding protein (Angiopteris evecta (Mule's foot fern)).